A 478-amino-acid polypeptide reads, in one-letter code: Glycogen synthase (478 aa).

Lysine 15 provides a ligand contact to ADP-alpha-D-glucose.

This sequence belongs to the glycosyltransferase 1 family. Bacterial/plant glycogen synthase subfamily.

The catalysed reaction is [(1-&gt;4)-alpha-D-glucosyl](n) + ADP-alpha-D-glucose = [(1-&gt;4)-alpha-D-glucosyl](n+1) + ADP + H(+). Its pathway is glycan biosynthesis; glycogen biosynthesis. Its function is as follows. Synthesizes alpha-1,4-glucan chains using ADP-glucose. This Acholeplasma laidlawii (strain PG-8A) protein is Glycogen synthase.